The following is a 291-amino-acid chain: Nucleotide-binding protein LJ_0866 (291 aa).

13 to 20 lines the ATP pocket; sequence GMSGAGKT. 63–66 serves as a coordination point for GTP; that stretch reads DLRV.

The protein belongs to the RapZ-like family.

Its function is as follows. Displays ATPase and GTPase activities. This is Nucleotide-binding protein LJ_0866 from Lactobacillus johnsonii (strain CNCM I-12250 / La1 / NCC 533).